Reading from the N-terminus, the 387-residue chain is Proteinase R (387 aa).

The first 21 residues, 1 to 21 (MRLSILLGLLPLAPRPPAVDA), serve as a signal peptide directing secretion. A propeptide spanning residues 22-108 (VEQRSEPAPL…IEQDAIVNIN (87 aa)) is cleaved from the precursor. The Inhibitor I9 domain occupies 42 to 107 (KYIVKLKEGS…YIEQDAIVNI (66 aa)). The Peptidase S8 domain maps to 115–387 (PWGLARISST…NLLAYNNYQG (273 aa)). Residue Thr-124 coordinates Ca(2+). 2 disulfides stabilise this stretch: Cys-142-Cys-231 and Cys-286-Cys-357. Catalysis depends on charge relay system residues Asp-147 and His-177. Residue Asp-308 participates in Ca(2+) binding. The active-site Charge relay system is Ser-332. Ca(2+) is bound at residue Asp-368.

The protein belongs to the peptidase S8 family. The cofactor is Ca(2+).

Functionally, serine proteinase. In Parengyodontium album (Tritirachium album), this protein is Proteinase R (PROR).